The chain runs to 146 residues: Putative inactive cytochrome P450 2G1 (146 aa).

Cys91 is a binding site for heme.

This sequence belongs to the cytochrome P450 family. Heme serves as cofactor.

This chain is Putative inactive cytochrome P450 2G1 (CYP2G1P), found in Homo sapiens (Human).